Consider the following 869-residue polypeptide: Leucine--tRNA ligase (869 aa).

The 'HIGH' region signature appears at 42 to 52 (PYPSGRLHMGH). Positions 620-624 (KMSKS) match the 'KMSKS' region motif. K623 lines the ATP pocket.

Belongs to the class-I aminoacyl-tRNA synthetase family.

It localises to the cytoplasm. It catalyses the reaction tRNA(Leu) + L-leucine + ATP = L-leucyl-tRNA(Leu) + AMP + diphosphate. The protein is Leucine--tRNA ligase of Hamiltonella defensa subsp. Acyrthosiphon pisum (strain 5AT).